The primary structure comprises 439 residues: Arginine biosynthesis bifunctional protein ArgJ, mitochondrial (439 aa).

Residues threonine 175, lysine 201, threonine 212, glutamate 301, asparagine 434, and serine 439 each contribute to the substrate site. Catalysis depends on threonine 212, which acts as the Nucleophile.

This sequence belongs to the ArgJ family. Heterodimer of an alpha and a beta chain. Post-translationally, the alpha and beta chains are autoproteolytically processed from a single precursor protein within the mitochondrion.

The protein resides in the mitochondrion matrix. It carries out the reaction N(2)-acetyl-L-ornithine + L-glutamate = N-acetyl-L-glutamate + L-ornithine. The enzyme catalyses L-glutamate + acetyl-CoA = N-acetyl-L-glutamate + CoA + H(+). It participates in amino-acid biosynthesis; L-arginine biosynthesis; L-ornithine and N-acetyl-L-glutamate from L-glutamate and N(2)-acetyl-L-ornithine (cyclic): step 1/1. The protein operates within amino-acid biosynthesis; L-arginine biosynthesis; N(2)-acetyl-L-ornithine from L-glutamate: step 1/4. Catalyzes two activities which are involved in the cyclic version of arginine biosynthesis: the synthesis of acetylglutamate from glutamate and acetyl-CoA, and of ornithine by transacetylation between acetylornithine and glutamate. In Candida albicans (strain WO-1) (Yeast), this protein is Arginine biosynthesis bifunctional protein ArgJ, mitochondrial.